Reading from the N-terminus, the 102-residue chain is Mini zinc finger protein 1 (102 aa).

Residues 1 to 13 are compositionally biased toward basic residues; that stretch reads MMKKRQMVIKQRS. Residues 1 to 34 form a disordered region; it reads MMKKRQMVIKQRSRNSNTSSSWTTTSSSSSSSEI. A compositionally biased stretch (low complexity) spans 14-32; the sequence is RNSNTSSSWTTTSSSSSSS. The segment at 39–88 adopts a ZF-HD dimerization-type; degenerate zinc-finger fold; sequence YVECQKNHAANIGGYAVDGCREFMAAGVEGTVDALRCAACGCHRNFHRKE.

Homo- and heterodimers. Interacts with ZHD1, ZHD5, ZHD6, ZHD7, ZHD8, ZHD10 and ZHD13. In terms of tissue distribution, mostly expressed in roots and stems, present in siliques and seedlings, and weakly observed in petioles, leaves and flowers.

Its subcellular location is the cytoplasm. Functionally, inhibits zinc finger homeodomain (ZHD) transcription factors, such as ZHD5, by interacting with them to prevent both their nuclear localization and their DNA-binding properties. Involved in integrating signals from multiple hormones by preventing the expression of genes involved in gibberellic acid (GA), auxin and brassinosteroid signaling and by promoting the expression of abscisic acid (ABA)-responsive genes. Regulates several development aspects, including photomorphogenesis, apical dominance, longevity, flower morphology and fertility, as well as root and stem elongation. Promotes the formation of ectopic shoot meristems on leaf margins. This Arabidopsis thaliana (Mouse-ear cress) protein is Mini zinc finger protein 1 (MIF1).